Consider the following 303-residue polypeptide: MYYGFDIGGTKIALGVFDSTRRLQWEKRVPTPHTSYSAFLDAVCELVAEADQRFGVKGSVGIGIPGMPETEDGTLYAANVPAASGKPLRADLSARLDRDVRLDNDANCFALSEAWDDEFTQYPLVMGLILGTGVGGGLVLNGKPITGQSYITGEFGHMRLPVDALTLMGFDFPLRRCGCGQMGCIENYLSGRGFAWLYQHYYDQSLQAPEIIALWEQGDEQAHAHVERYLDLLAVCLGNILTIVDPDLLVIGGGLSNFTAITTQLAERLPRHLLPVARAPRIERARHGDAGGMRGAAFLHLTD.

Residues 4-11 (GFDIGGTK) and 133-140 (GVGGGLVL) each bind ATP. The Zn(2+) site is built by His157, Cys177, Cys179, and Cys184.

Belongs to the ROK (NagC/XylR) family. NagK subfamily.

It carries out the reaction N-acetyl-D-glucosamine + ATP = N-acetyl-D-glucosamine 6-phosphate + ADP + H(+). Its pathway is cell wall biogenesis; peptidoglycan recycling. Functionally, catalyzes the phosphorylation of N-acetyl-D-glucosamine (GlcNAc) derived from cell-wall degradation, yielding GlcNAc-6-P. The chain is N-acetyl-D-glucosamine kinase from Salmonella agona (strain SL483).